A 244-amino-acid polypeptide reads, in one-letter code: Lipoprotein-releasing system ATP-binding protein LolD (244 aa).

Positions 19-244 (IRAEALAKTY…KLRELAPSAV (226 aa)) constitute an ABC transporter domain. Position 55-62 (55-62 (GASGAGKS)) interacts with ATP.

Belongs to the ABC transporter superfamily. Lipoprotein translocase (TC 3.A.1.125) family. The complex is composed of two ATP-binding proteins (LolD) and two transmembrane proteins (LolC and LolE).

It localises to the cell inner membrane. Functionally, part of the ABC transporter complex LolCDE involved in the translocation of mature outer membrane-directed lipoproteins, from the inner membrane to the periplasmic chaperone, LolA. Responsible for the formation of the LolA-lipoprotein complex in an ATP-dependent manner. In Xanthomonas oryzae pv. oryzae (strain MAFF 311018), this protein is Lipoprotein-releasing system ATP-binding protein LolD.